The chain runs to 325 residues: Lipoyl synthase (325 aa).

Cysteine 72, cysteine 77, cysteine 83, cysteine 98, cysteine 102, cysteine 105, and serine 312 together coordinate [4Fe-4S] cluster. One can recognise a Radical SAM core domain in the interval 84–301 (FAGGTATFMI…AEEGERMGFK (218 aa)).

The protein belongs to the radical SAM superfamily. Lipoyl synthase family. Requires [4Fe-4S] cluster as cofactor.

It is found in the cytoplasm. The enzyme catalyses [[Fe-S] cluster scaffold protein carrying a second [4Fe-4S](2+) cluster] + N(6)-octanoyl-L-lysyl-[protein] + 2 oxidized [2Fe-2S]-[ferredoxin] + 2 S-adenosyl-L-methionine + 4 H(+) = [[Fe-S] cluster scaffold protein] + N(6)-[(R)-dihydrolipoyl]-L-lysyl-[protein] + 4 Fe(3+) + 2 hydrogen sulfide + 2 5'-deoxyadenosine + 2 L-methionine + 2 reduced [2Fe-2S]-[ferredoxin]. It functions in the pathway protein modification; protein lipoylation via endogenous pathway; protein N(6)-(lipoyl)lysine from octanoyl-[acyl-carrier-protein]: step 2/2. In terms of biological role, catalyzes the radical-mediated insertion of two sulfur atoms into the C-6 and C-8 positions of the octanoyl moiety bound to the lipoyl domains of lipoate-dependent enzymes, thereby converting the octanoylated domains into lipoylated derivatives. The protein is Lipoyl synthase of Azotobacter vinelandii (strain DJ / ATCC BAA-1303).